A 449-amino-acid chain; its full sequence is Bifunctional protein GlmU (449 aa).

Residues 1-229 (MKLSAVILAA…EEDIYGINDR (229 aa)) form a pyrophosphorylase region. UDP-N-acetyl-alpha-D-glucosamine-binding positions include 8 to 11 (LAAG), K22, Q73, and 78 to 79 (GT). D102 is a binding site for Mg(2+). UDP-N-acetyl-alpha-D-glucosamine is bound by residues G139, E154, N169, and N227. Residue N227 participates in Mg(2+) binding. The segment at 230-250 (VQLAQAENILRQRKNRELMLS) is linker. Residues 251-449 (GVSLMDPAST…AGQKHLPRKG (199 aa)) are N-acetyltransferase. 2 residues coordinate UDP-N-acetyl-alpha-D-glucosamine: R332 and K350. H362 (proton acceptor) is an active-site residue. Residues Y365 and N376 each coordinate UDP-N-acetyl-alpha-D-glucosamine. Acetyl-CoA is bound by residues A379, 385–386 (NY), S404, A422, and R439.

The protein in the N-terminal section; belongs to the N-acetylglucosamine-1-phosphate uridyltransferase family. This sequence in the C-terminal section; belongs to the transferase hexapeptide repeat family. As to quaternary structure, homotrimer. It depends on Mg(2+) as a cofactor.

It localises to the cytoplasm. The enzyme catalyses alpha-D-glucosamine 1-phosphate + acetyl-CoA = N-acetyl-alpha-D-glucosamine 1-phosphate + CoA + H(+). It catalyses the reaction N-acetyl-alpha-D-glucosamine 1-phosphate + UTP + H(+) = UDP-N-acetyl-alpha-D-glucosamine + diphosphate. It participates in nucleotide-sugar biosynthesis; UDP-N-acetyl-alpha-D-glucosamine biosynthesis; N-acetyl-alpha-D-glucosamine 1-phosphate from alpha-D-glucosamine 6-phosphate (route II): step 2/2. The protein operates within nucleotide-sugar biosynthesis; UDP-N-acetyl-alpha-D-glucosamine biosynthesis; UDP-N-acetyl-alpha-D-glucosamine from N-acetyl-alpha-D-glucosamine 1-phosphate: step 1/1. It functions in the pathway bacterial outer membrane biogenesis; LPS lipid A biosynthesis. Functionally, catalyzes the last two sequential reactions in the de novo biosynthetic pathway for UDP-N-acetylglucosamine (UDP-GlcNAc). The C-terminal domain catalyzes the transfer of acetyl group from acetyl coenzyme A to glucosamine-1-phosphate (GlcN-1-P) to produce N-acetylglucosamine-1-phosphate (GlcNAc-1-P), which is converted into UDP-GlcNAc by the transfer of uridine 5-monophosphate (from uridine 5-triphosphate), a reaction catalyzed by the N-terminal domain. This is Bifunctional protein GlmU from Syntrophomonas wolfei subsp. wolfei (strain DSM 2245B / Goettingen).